A 39-amino-acid polypeptide reads, in one-letter code: MIEPLLCGIVLGLVPITLLGLFVSAWNQYRRGSGMLDID.

Residues 5-25 (LLCGIVLGLVPITLLGLFVSA) form a helical membrane-spanning segment.

It belongs to the PetG family. In terms of assembly, the 4 large subunits of the cytochrome b6-f complex are cytochrome b6, subunit IV (17 kDa polypeptide, PetD), cytochrome f and the Rieske protein, while the 4 small subunits are PetG, PetL, PetM and PetN. The complex functions as a dimer.

It is found in the cellular thylakoid membrane. Its function is as follows. Component of the cytochrome b6-f complex, which mediates electron transfer between photosystem II (PSII) and photosystem I (PSI), cyclic electron flow around PSI, and state transitions. PetG is required for either the stability or assembly of the cytochrome b6-f complex. In Prochlorococcus marinus (strain MIT 9301), this protein is Cytochrome b6-f complex subunit 5.